We begin with the raw amino-acid sequence, 125 residues long: Testis-specific protein LINC02914 (125 aa).

Positions 1-12 are enriched in basic and acidic residues; it reads MHRKEPGARLEA. The tract at residues 1 to 45 is disordered; sequence MHRKEPGARLEATRGAARPHKQGTKPMITRPSVSQLGEGKCPSSQ.

Expressed in testes and ejaculated spermatozoa (at protein level).

It localises to the cytoplasm. The protein localises to the nucleus. It is found in the cell projection. Its subcellular location is the cilium. The protein resides in the flagellum. In terms of biological role, may play a role in the flagellum biology. This Homo sapiens (Human) protein is Testis-specific protein LINC02914.